Consider the following 657-residue polypeptide: THO complex subunit 1 (657 aa).

An N-acetylmethionine modification is found at M1. S2 is modified (phosphoserine). Phosphothreonine is present on T4. Residue K31 forms a Glycyl lysine isopeptide (Lys-Gly) (interchain with G-Cter in SUMO2) linkage. K133 carries the N6-acetyllysine modification. The tract at residues K133–F167 is dock domain; interaction with THOC2. Residues Q194 to A222 are disordered. A compositionally biased stretch (acidic residues) spans R206–A222. Residues S227 to P397 are dock domain; interaction with THOC2. Residue K300 is modified to N6-acetyllysine. A Glycyl lysine isopeptide (Lys-Gly) (interchain with G-Cter in SUMO2) cross-link involves residue K408. Residues R414–K430 carry the Nuclear localization signal motif. Residues L533–V569 are disordered. S537 carries the phosphoserine modification. A Phosphothreonine modification is found at T542. Residues A553–V569 are compositionally biased toward basic and acidic residues. S560 is modified (phosphoserine). In terms of domain architecture, Death spans T570–N653. K580 participates in a covalent cross-link: Glycyl lysine isopeptide (Lys-Gly) (interchain with G-Cter in SUMO2). A Glycyl lysine isopeptide (Lys-Gly) (interchain with G-Cter in SUMO1); alternate cross-link involves residue K595. A Glycyl lysine isopeptide (Lys-Gly) (interchain with G-Cter in SUMO2); alternate cross-link involves residue K595.

It belongs to the THOC1 family. Component of the THO subcomplex, which is composed of THOC1, THOC2, THOC3, THOC5, THOC6 and THOC7. The THO subcomplex interacts with DDX39B to form the THO-DDX39B complex which multimerizes into a 28-subunit tetrameric assembly. Component of the transcription/export (TREX) complex at least composed of ALYREF/THOC4, DDX39B, SARNP/CIP29, CHTOP and the THO subcomplex; in the complex interacts with THOC2, THOC5 and THOC7. TREX seems to have a dynamic structure involving ATP-dependent remodeling. Binds to the hypophosphorylated form of RB1. Interacts with RNA polymerase II. Interacts with LUZP4. In terms of processing, expression is altered specifically during apoptosis and is accompanied by the appearance of novel forms with smaller apparent molecular mass. Polyubiquitinated, leading to proteasomal degradation; probably involves NEDD4. In terms of tissue distribution, ubiquitous. Expressed in various cancer cell lines. Expressed at very low levels in normal breast epithelial cells and highly expressed in breast tumors. Expression is strongly associated with an aggressive phenotype of breast tumors and expression correlates with tumor size and the metastatic state of the tumor progression.

The protein localises to the nucleus speckle. The protein resides in the nucleus. It is found in the nucleoplasm. Its subcellular location is the nucleus matrix. It localises to the cytoplasm. Its function is as follows. Component of the THO subcomplex of the TREX complex which is thought to couple mRNA transcription, processing and nuclear export, and which specifically associates with spliced mRNA and not with unspliced pre-mRNA. Required for efficient export of polyadenylated RNA. The THOC1-THOC2-THOC3 core complex alone is sufficient to bind export factor NXF1-NXT1 and promote ATPase activity of DDX39B/UAP56. TREX is recruited to spliced mRNAs by a transcription-independent mechanism, binds to mRNA upstream of the exon-junction complex (EJC) and is recruited in a splicing- and cap-dependent manner to a region near the 5' end of the mRNA where it functions in mRNA export to the cytoplasm via the TAP/NXF1 pathway. Regulates transcriptional elongation of a subset of genes. Involved in genome stability by preventing co-transcriptional R-loop formation. May play a role in hair cell formation, hence may be involved in hearing. In terms of biological role, participates in an apoptotic pathway which is characterized by activation of caspase-6, increases in the expression of BAK1 and BCL2L1 and activation of NF-kappa-B. This pathway does not require p53/TP53, nor does the presence of p53/TP53 affect the efficiency of cell killing. Activates a G2/M cell cycle checkpoint prior to the onset of apoptosis. Apoptosis is inhibited by association with RB1. (Microbial infection) The TREX complex is essential for the export of Kaposi's sarcoma-associated herpesvirus (KSHV) intronless mRNAs and infectious virus production. In Homo sapiens (Human), this protein is THO complex subunit 1 (THOC1).